We begin with the raw amino-acid sequence, 154 residues long: Transcriptional repressor NrdR (154 aa).

The segment at 3–34 (CPFCRHPDSRVVDSRETDEGQAIRRRRSCPEC) is a zinc-finger region. The region spanning 46–136 (LAVVKRSGVT…VYRSFESAAD (91 aa)) is the ATP-cone domain.

The protein belongs to the NrdR family. The cofactor is Zn(2+).

Functionally, negatively regulates transcription of bacterial ribonucleotide reductase nrd genes and operons by binding to NrdR-boxes. In Mycobacterium sp. (strain JLS), this protein is Transcriptional repressor NrdR.